A 509-amino-acid polypeptide reads, in one-letter code: Probable cytochrome P450 4ac1 (509 aa).

Residues Glu-317 and Cys-454 each coordinate heme.

The protein belongs to the cytochrome P450 family. Heme is required as a cofactor.

It is found in the endoplasmic reticulum membrane. It localises to the microsome membrane. May be involved in the metabolism of insect hormones and in the breakdown of synthetic insecticides. This is Probable cytochrome P450 4ac1 (Cyp4ac1) from Drosophila melanogaster (Fruit fly).